The sequence spans 381 residues: MAESHLLQWLLLLLPTLCGPGTAAWTTSSLACAQGPEFWCQSLEQALQCRALGHCLQEVWGHVGADDLCQECEDIVHILNKMAKEAIFQDTMRKFLEQECNVLPLKLLMPQCNQVLDDYFPLVIDYFQNQTDSNGICMHLGLCKSRQPEPEQEPGMSDPLPKPLRDPLPDPLLDKLVLPVLPGALQARPGPHTQDLSEQQFPIPLPYCWLCRALIKRIQAMIPKGALAVAVAQVCRVVPLVAGGICQCLAERYSVILLDTLLGRMLPQLVCRLVLRCSMDDSAGPRSPTGEWLPRDSECHLCMSVTTQAGNSSEQAIPQAMLQACVGSWLDREKCKQFVEQHTPQLLTLVPRGWDAHTTCQALGVCGTMSSPLQCIHSPDL.

An N-terminal signal peptide occupies residues 1 to 24 (MAESHLLQWLLLLLPTLCGPGTAA). In terms of domain architecture, Saposin A-type spans 25-65 (WTTSSLACAQGPEFWCQSLEQALQCRALGHCLQEVWGHVGA). The propeptide occupies 25–200 (WTTSSLACAQ…PHTQDLSEQQ (176 aa)). 3 Saposin B-type domains span residues 65-147 (ADDL…KSRQ), 204-281 (PLPY…SMDD), and 295-370 (RDSE…GTMS). Cystine bridges form between Cys69–Cys143, Cys72–Cys137, Cys100–Cys112, Cys208–Cys277, Cys211–Cys271, Cys235–Cys246, Cys299–Cys366, Cys302–Cys360, and Cys325–Cys335. N-linked (GlcNAc...) asparagine glycosylation is present at Asn129. The propeptide occupies 280 to 381 (DDSAGPRSPT…PLQCIHSPDL (102 aa)). N-linked (GlcNAc...) asparagine glycosylation is present at Asn311.

In terms of assembly, homodimer; disulfide-linked.

The protein localises to the secreted. Its subcellular location is the extracellular space. The protein resides in the surface film. Its function is as follows. Pulmonary surfactant-associated proteins promote alveolar stability by lowering the surface tension at the air-liquid interface in the peripheral air spaces. SP-B increases the collapse pressure of palmitic acid to nearly 70 millinewtons per meter. In Homo sapiens (Human), this protein is Pulmonary surfactant-associated protein B (SFTPB).